Consider the following 1972-residue polypeptide: Myosin-11 (1972 aa).

S8, S23, and S40 each carry phosphoserine. Positions V31 to P81 constitute a Myosin N-terminal SH3-like domain. Residues S85 to D783 enclose the Myosin motor domain. K129 carries the N6,N6,N6-trimethyllysine modification. Residue G178–T185 participates in ATP binding. Actin-binding stretches follow at residues L661–H683 and R762–A776. The 30-residue stretch at I786–A815 folds into the IQ domain. Residues L844 to A1934 are a coiled coil. Phosphothreonine is present on T1177. Phosphoserine occurs at positions 1684 and 1722. Polar residues predominate over residues N1771 to Q1788. Disordered regions lie at residues N1771 to L1797 and Q1867 to E1972. Residues Q1867–N1876 are compositionally biased toward basic and acidic residues. The interval S1935 to E1972 is C-terminal. T1951 is subject to Phosphothreonine. Phosphoserine occurs at positions 1954 and 1971.

It belongs to the TRAFAC class myosin-kinesin ATPase superfamily. Myosin family. In terms of assembly, muscle myosin is a hexameric protein that consists of 2 heavy chain subunits (MHC), 2 alkali light chain subunits (MLC) and 2 regulatory light chain subunits (MLC-2).

The protein resides in the melanosome. It is found in the cytoplasm. The protein localises to the myofibril. Muscle contraction. The chain is Myosin-11 (Myh11) from Mus musculus (Mouse).